The chain runs to 81 residues: Photosystem I iron-sulfur center (81 aa).

2 4Fe-4S ferredoxin-type domains span residues S2–W31 and I39–Y68. 8 residues coordinate [4Fe-4S] cluster: C11, C14, C17, C21, C48, C51, C54, and C58.

As to quaternary structure, the eukaryotic PSI reaction center is composed of at least 11 subunits. The cofactor is [4Fe-4S] cluster.

The protein resides in the plastid. The protein localises to the chloroplast thylakoid membrane. It carries out the reaction reduced [plastocyanin] + hnu + oxidized [2Fe-2S]-[ferredoxin] = oxidized [plastocyanin] + reduced [2Fe-2S]-[ferredoxin]. Functionally, apoprotein for the two 4Fe-4S centers FA and FB of photosystem I (PSI); essential for photochemical activity. FB is the terminal electron acceptor of PSI, donating electrons to ferredoxin. The C-terminus interacts with PsaA/B/D and helps assemble the protein into the PSI complex. Required for binding of PsaD and PsaE to PSI. PSI is a plastocyanin/cytochrome c6-ferredoxin oxidoreductase, converting photonic excitation into a charge separation, which transfers an electron from the donor P700 chlorophyll pair to the spectroscopically characterized acceptors A0, A1, FX, FA and FB in turn. The chain is Photosystem I iron-sulfur center from Nephroselmis olivacea (Green alga).